Reading from the N-terminus, the 220-residue chain is Carbonic anhydrase (220 aa).

Zn(2+) contacts are provided by Cys-39, Asp-41, His-98, and Cys-101.

This sequence belongs to the beta-class carbonic anhydrase family. The cofactor is Zn(2+).

It carries out the reaction hydrogencarbonate + H(+) = CO2 + H2O. This is Carbonic anhydrase (cynT) from Pseudomonas aeruginosa (strain ATCC 15692 / DSM 22644 / CIP 104116 / JCM 14847 / LMG 12228 / 1C / PRS 101 / PAO1).